Here is a 189-residue protein sequence, read N- to C-terminus: Glucose-6-phosphate isomerase (189 aa).

Fe cation-binding residues include histidine 88, histidine 90, glutamate 97, and histidine 136.

The protein belongs to the archaeal-type GPI family. As to quaternary structure, homodimer.

It is found in the cytoplasm. The catalysed reaction is alpha-D-glucose 6-phosphate = beta-D-fructose 6-phosphate. It participates in carbohydrate degradation; glycolysis; D-glyceraldehyde 3-phosphate and glycerone phosphate from D-glucose: step 2/4. The polypeptide is Glucose-6-phosphate isomerase (Thermococcus onnurineus (strain NA1)).